Here is a 306-residue protein sequence, read N- to C-terminus: Fe-S cluster assembly protein dre2 (306 aa).

Residues asparagine 21 to valine 150 are N-terminal SAM-like domain. The tract at residues proline 151–leucine 196 is linker. Residues cysteine 206, cysteine 218, cysteine 221, and cysteine 223 each coordinate [2Fe-2S] cluster. A fe-S binding site A region spans residues cysteine 206–cysteine 223. The [4Fe-4S] cluster site is built by cysteine 269, cysteine 272, cysteine 280, and cysteine 283. Short sequence motifs (cx2C motif) lie at residues cysteine 269–cysteine 272 and cysteine 280–cysteine 283. Positions cysteine 269–cysteine 283 are fe-S binding site B.

The protein belongs to the anamorsin family. In terms of assembly, monomer. Interacts with tah18. Interacts with mia40. The cofactor is [2Fe-2S] cluster. [4Fe-4S] cluster is required as a cofactor.

Its subcellular location is the cytoplasm. It localises to the mitochondrion intermembrane space. In terms of biological role, component of the cytosolic iron-sulfur (Fe-S) protein assembly (CIA) machinery required for the maturation of extramitochondrial Fe-S proteins. Part of an electron transfer chain functioning in an early step of cytosolic Fe-S biogenesis, facilitating the de novo assembly of a [4Fe-4S] cluster on the scaffold complex cfd1-nbp35. Electrons are transferred to dre2 from NADPH via the FAD- and FMN-containing protein tah18. Tah18-dre2 are also required for the assembly of the diferric tyrosyl radical cofactor of ribonucleotide reductase (RNR), probably by providing electrons for reduction during radical cofactor maturation in the catalytic small subunit rnr2. This Talaromyces stipitatus (strain ATCC 10500 / CBS 375.48 / QM 6759 / NRRL 1006) (Penicillium stipitatum) protein is Fe-S cluster assembly protein dre2.